Consider the following 386-residue polypeptide: Epoxyqueuosine reductase (386 aa).

Cob(II)alamin is bound by residues arginine 57, cysteine 97, aspartate 134, 139–141 (SDR), serine 152, asparagine 155, isoleucine 158, and leucine 169. The Proton donor role is filled by aspartate 134. The 4Fe-4S ferredoxin-type domain occupies 178 to 208 (FEPDVPIEDMCGSCTKCLDACPTGALVNPGQ). Residues cysteine 188, cysteine 191, cysteine 194, cysteine 198, and cysteine 214 each contribute to the [4Fe-4S] cluster site. Serine 216 contacts cob(II)alamin. 2 residues coordinate tRNA: glutamine 220 and lysine 222. Residues cysteine 240, cysteine 243, and cysteine 247 each coordinate [4Fe-4S] cluster. 240–241 (CD) serves as a coordination point for cob(II)alamin. TRNA contacts are provided by asparagine 280, arginine 281, arginine 295, lysine 297, and lysine 298. The HEAT-like PBS-type repeat unit spans residues 333–357 (RGTAAWAIGKIGDPAYAEELEKALE).

The protein belongs to the QueG family. Monomer. It depends on cob(II)alamin as a cofactor. [4Fe-4S] cluster serves as cofactor.

The protein resides in the cytoplasm. It catalyses the reaction epoxyqueuosine(34) in tRNA + AH2 = queuosine(34) in tRNA + A + H2O. The protein operates within tRNA modification; tRNA-queuosine biosynthesis. Its function is as follows. Catalyzes the conversion of epoxyqueuosine (oQ) to queuosine (Q), which is a hypermodified base found in the wobble positions of tRNA(Asp), tRNA(Asn), tRNA(His) and tRNA(Tyr). In Bacillus subtilis (strain 168), this protein is Epoxyqueuosine reductase.